The primary structure comprises 196 residues: ATP-dependent Clp protease proteolytic subunit 1 (196 aa).

The active-site Nucleophile is the Ser-96. Residue His-121 is part of the active site.

This sequence belongs to the peptidase S14 family. Fourteen ClpP subunits assemble into 2 heptameric rings which stack back to back to give a disk-like structure with a central cavity, resembling the structure of eukaryotic proteasomes.

The protein localises to the cytoplasm. It carries out the reaction Hydrolysis of proteins to small peptides in the presence of ATP and magnesium. alpha-casein is the usual test substrate. In the absence of ATP, only oligopeptides shorter than five residues are hydrolyzed (such as succinyl-Leu-Tyr-|-NHMec, and Leu-Tyr-Leu-|-Tyr-Trp, in which cleavage of the -Tyr-|-Leu- and -Tyr-|-Trp bonds also occurs).. Its function is as follows. Cleaves peptides in various proteins in a process that requires ATP hydrolysis. Has a chymotrypsin-like activity. Plays a major role in the degradation of misfolded proteins. The sequence is that of ATP-dependent Clp protease proteolytic subunit 1 from Prochlorococcus marinus (strain SARG / CCMP1375 / SS120).